A 991-amino-acid polypeptide reads, in one-letter code: Glutamate receptor 1 (991 aa).

The N-terminal stretch at 1–27 is a signal peptide; that stretch reads MHSRLKFLAYLHFICASSIFWPEFSSA. The Extracellular segment spans residues 28–611; the sequence is QQQQQTVSLT…VFSFLNPLSQ (584 aa). Residues asparagine 67, asparagine 195, asparagine 208, and asparagine 281 are each glycosylated (N-linked (GlcNAc...) asparagine). Disordered regions lie at residues 300–321 and 354–379; these read DSRK…GPNS and FRSN…NESS. Residues 308–318 show a composition bias toward polar residues; sequence SGQSQSQNAGG. The span at 365 to 379 shows a compositional bias: low complexity; sequence GGSSSSSATGTNESS. N-linked (GlcNAc...) asparagine glycans are attached at residues asparagine 376, asparagine 385, asparagine 426, asparagine 437, and asparagine 477. A helical membrane pass occupies residues 612-632; it reads EIWISVILSYVGVSFVLYFVT. At 633-710 the chain is on the cytoplasmic side; that stretch reads RFPPYEWRIV…PSIAGRIAAA (78 aa). A helical transmembrane segment spans residues 711–731; sequence VWWFFTIILISSYTANLAAFL. The Extracellular segment spans residues 732 to 895; it reads TVERMVAPIK…STPNELSLSN (164 aa). A helical membrane pass occupies residues 896 to 916; it reads VAGIYYILIGGLLLAVIVAIM. Residues 917–991 lie on the Cytoplasmic side of the membrane; the sequence is EFFCRNKTPQ…ASNVRYQYSM (75 aa).

This sequence belongs to the glutamate-gated ion channel (TC 1.A.10.1) family. Homooligomer. As to expression, central nervous system.

Its subcellular location is the cell membrane. It is found in the postsynaptic cell membrane. In terms of biological role, receptor for glutamate. L-glutamate acts as an excitatory neurotransmitter at many synapses in the central nervous system. The postsynaptic actions of Glu are mediated by a variety of receptors that are named according to their selective agonists. Forms ligand-gated ion channels which are activated by kainate. In Drosophila melanogaster (Fruit fly), this protein is Glutamate receptor 1 (GluRIA).